The following is a 485-amino-acid chain: GTPase Der (485 aa).

EngA-type G domains lie at 3-167 and 176-349; these read PTIA…PEPE and PVFA…NAAM. GTP contacts are provided by residues 9–16, 56–60, 119–122, 182–189, 229–233, and 294–297; these read GRPNVGKS, DTGGF, NKGE, DTAGV, and NKWD. In terms of domain architecture, KH-like spans 350-434; it reads IKMPTPKITR…PLRIQYNVSE (85 aa). The disordered stretch occupies residues 435–485; the sequence is NPYENADDKPKKKPLRRVSLSNRIEKREGRKEEKNRFKKKTKVSVKKQFSK. Residues 457–469 show a composition bias toward basic and acidic residues; the sequence is RIEKREGRKEEKN. Over residues 470-485 the composition is skewed to basic residues; it reads RFKKKTKVSVKKQFSK.

It belongs to the TRAFAC class TrmE-Era-EngA-EngB-Septin-like GTPase superfamily. EngA (Der) GTPase family. In terms of assembly, associates with the 50S ribosomal subunit.

Functionally, GTPase that plays an essential role in the late steps of ribosome biogenesis. In Neisseria meningitidis serogroup A / serotype 4A (strain DSM 15465 / Z2491), this protein is GTPase Der.